A 110-amino-acid chain; its full sequence is Insulin-2 (110 aa).

Residues 1–24 (MALWMRFLPLLALLFLWESHPTQA) form the signal peptide. 3 cysteine pairs are disulfide-bonded: cysteine 31–cysteine 96, cysteine 43–cysteine 109, and cysteine 95–cysteine 100. The propeptide at 57–87 (EVEDPQVAQLELGGGPGAGDLQTLALEVAQQ) is c peptide.

This sequence belongs to the insulin family. As to quaternary structure, heterodimer of a B chain and an A chain linked by two disulfide bonds.

It is found in the secreted. In terms of biological role, insulin decreases blood glucose concentration. It increases cell permeability to monosaccharides, amino acids and fatty acids. It accelerates glycolysis, the pentose phosphate cycle, and glycogen synthesis in liver. This Mus musculus (Mouse) protein is Insulin-2 (Ins2).